A 186-amino-acid polypeptide reads, in one-letter code: Probable GPI-anchored cupredoxin ARB_05732-1 (186 aa).

The signal sequence occupies residues Met-1–Ala-18. Residue His-55 coordinates Cu cation. An intrachain disulfide couples Cys-66 to Cys-104. Residue Asn-87 is glycosylated (N-linked (GlcNAc...) asparagine). Cu cation contacts are provided by Cys-98 and His-103. A disordered region spans residues Gly-130–Ser-160. Asn-142 carries an N-linked (GlcNAc...) asparagine glycan. Low complexity predominate over residues Gly-143–Ser-160. Gly-153 carries the GPI-anchor amidated glycine lipid modification. The propeptide at Gly-154 to Leu-186 is removed in mature form.

This sequence belongs to the multicopper oxidase family. Cu cation is required as a cofactor.

Its subcellular location is the cell membrane. The protein resides in the secreted. Its function is as follows. Probable electron transfer copper protein that serves as a direct electron donor. This is Probable GPI-anchored cupredoxin ARB_05732-1 from Arthroderma benhamiae (strain ATCC MYA-4681 / CBS 112371) (Trichophyton mentagrophytes).